A 448-amino-acid polypeptide reads, in one-letter code: Trigger factor (448 aa).

In terms of domain architecture, PPIase FKBP-type spans 167–253 (GSIVRVDFVE…VKDIKRRDIP (87 aa)).

This sequence belongs to the FKBP-type PPIase family. Tig subfamily.

It localises to the cytoplasm. The catalysed reaction is [protein]-peptidylproline (omega=180) = [protein]-peptidylproline (omega=0). Its function is as follows. Involved in protein export. Acts as a chaperone by maintaining the newly synthesized protein in an open conformation. Functions as a peptidyl-prolyl cis-trans isomerase. The polypeptide is Trigger factor (Borrelia recurrentis (strain A1)).